Consider the following 332-residue polypeptide: UDP-N-acetylenolpyruvoylglucosamine reductase (332 aa).

Residues 15–184 enclose the FAD-binding PCMH-type domain; that stretch reads IDVSAACFLE…TYVSFRLSKR (170 aa). Residue R160 is part of the active site. S232 serves as the catalytic Proton donor. The active site involves E328.

The protein belongs to the MurB family. It depends on FAD as a cofactor.

It is found in the cytoplasm. The catalysed reaction is UDP-N-acetyl-alpha-D-muramate + NADP(+) = UDP-N-acetyl-3-O-(1-carboxyvinyl)-alpha-D-glucosamine + NADPH + H(+). Its pathway is cell wall biogenesis; peptidoglycan biosynthesis. In terms of biological role, cell wall formation. This is UDP-N-acetylenolpyruvoylglucosamine reductase from Bacteroides fragilis (strain YCH46).